Consider the following 198-residue polypeptide: Pyridoxal 5'-phosphate synthase subunit PdxT (198 aa).

Position 50-52 (50-52) interacts with L-glutamine; that stretch reads GES. C82 serves as the catalytic Nucleophile. Residues R114 and 143–144 each bind L-glutamine; that span reads IR. Catalysis depends on charge relay system residues H179 and E181.

The protein belongs to the glutaminase PdxT/SNO family. In the presence of PdxS, forms a dodecamer of heterodimers. Only shows activity in the heterodimer.

The enzyme catalyses aldehydo-D-ribose 5-phosphate + D-glyceraldehyde 3-phosphate + L-glutamine = pyridoxal 5'-phosphate + L-glutamate + phosphate + 3 H2O + H(+). It catalyses the reaction L-glutamine + H2O = L-glutamate + NH4(+). The protein operates within cofactor biosynthesis; pyridoxal 5'-phosphate biosynthesis. Catalyzes the hydrolysis of glutamine to glutamate and ammonia as part of the biosynthesis of pyridoxal 5'-phosphate. The resulting ammonia molecule is channeled to the active site of PdxS. The polypeptide is Pyridoxal 5'-phosphate synthase subunit PdxT (Metallosphaera sedula (strain ATCC 51363 / DSM 5348 / JCM 9185 / NBRC 15509 / TH2)).